Here is a 453-residue protein sequence, read N- to C-terminus: MSQLNPKVGFVSLGCPKALVDSERILTQLRSEGYDIVPSYDSADVVVVNTCGFIDSAVTESLDAIGEAMNQNGKVIVTGCLGKRPEQIREAYPNVLAVSGPQDYQSVMEAVHEALPPKHDPFVDLVPDYGIKLTPRHYAYLKISEGCNHKCSFCIIPSMRGKLVSRPVDEVLREAERLVRGGVRELLVVSQDTSAYGVDVKYAEKMWRDKAYQTRLKALCEGLSELDAWVRMHYVYPYPHVDEVVPLMAENRILPYLDIPFQHASPRILRLMKRPGAVEKTLERVQNWRRIAPDITVRSTFIVGFPGETEAEFEELLSFLDEAQLDRVGAFAYSPVEGATANDLPDAVPEEVKQERLARFMEKQAQISAARLEAKIGTVQQCLVDAIEGDIAVARSKADAPEIDGLVHIQNADQVALRVGEFVDVEITESDDHDLYGDALPAAARPALDLKVL.

The 111-residue stretch at 6–116 (PKVGFVSLGC…VMEAVHEALP (111 aa)) folds into the MTTase N-terminal domain. [4Fe-4S] cluster-binding residues include C15, C51, C80, C147, C151, and C154. The 238-residue stretch at 133–370 (LTPRHYAYLK…MEKQAQISAA (238 aa)) folds into the Radical SAM core domain. The TRAM domain occupies 373-441 (EAKIGTVQQC…DHDLYGDALP (69 aa)).

This sequence belongs to the methylthiotransferase family. RimO subfamily. It depends on [4Fe-4S] cluster as a cofactor.

It localises to the cytoplasm. The catalysed reaction is L-aspartate(89)-[ribosomal protein uS12]-hydrogen + (sulfur carrier)-SH + AH2 + 2 S-adenosyl-L-methionine = 3-methylsulfanyl-L-aspartate(89)-[ribosomal protein uS12]-hydrogen + (sulfur carrier)-H + 5'-deoxyadenosine + L-methionine + A + S-adenosyl-L-homocysteine + 2 H(+). Its function is as follows. Catalyzes the methylthiolation of an aspartic acid residue of ribosomal protein uS12. The sequence is that of Ribosomal protein uS12 methylthiotransferase RimO from Stenotrophomonas maltophilia (strain R551-3).